We begin with the raw amino-acid sequence, 199 residues long: Urease accessory protein UreG (199 aa).

Residue 8–15 (GPVGSGKT) coordinates GTP.

Belongs to the SIMIBI class G3E GTPase family. UreG subfamily. In terms of assembly, homodimer. UreH, UreF and UreG form a complex that acts as a GTP-hydrolysis-dependent molecular chaperone, activating the urease apoprotein by helping to assemble the nickel containing metallocenter of UreC. The UreE protein probably delivers the nickel.

It is found in the cytoplasm. Facilitates the functional incorporation of the urease nickel metallocenter. This process requires GTP hydrolysis, probably effectuated by UreG. This Helicobacter pylori (strain P12) protein is Urease accessory protein UreG.